The chain runs to 207 residues: LexA repressor (207 aa).

The segment at residues 28–48 is a DNA-binding region (H-T-H motif); the sequence is RAEISRELGFKSANAAEEHLK. Residues Ser-123 and Lys-160 each act as for autocatalytic cleavage activity in the active site.

It belongs to the peptidase S24 family. In terms of assembly, homodimer.

It carries out the reaction Hydrolysis of Ala-|-Gly bond in repressor LexA.. Functionally, represses a number of genes involved in the response to DNA damage (SOS response), including recA and lexA. In the presence of single-stranded DNA, RecA interacts with LexA causing an autocatalytic cleavage which disrupts the DNA-binding part of LexA, leading to derepression of the SOS regulon and eventually DNA repair. This is LexA repressor from Haemophilus influenzae (strain 86-028NP).